We begin with the raw amino-acid sequence, 214 residues long: Redox-sensing transcriptional repressor Rex (214 aa).

The segment at residues I16–F55 is a DNA-binding region (H-T-H motif). G90 to G95 is a binding site for NAD(+).

This sequence belongs to the transcriptional regulatory Rex family. As to quaternary structure, homodimer.

It is found in the cytoplasm. Functionally, modulates transcription in response to changes in cellular NADH/NAD(+) redox state. This is Redox-sensing transcriptional repressor Rex from Limosilactobacillus reuteri (strain DSM 20016) (Lactobacillus reuteri).